A 446-amino-acid polypeptide reads, in one-letter code: MSTFIGQLFGFAVIVYLVWRFIVPLVGRLMSARQDTVRQQLADAAAAADRLAEASQAHTKALEDAKSEAHRVVEEARTDAERIAEQLEAQADVEAERIKMQGARQVDLIRAQLTRQLRLELGHESVRQARELVRNHVADQAQQSATVDRFLDQLDAMAPATADVDYPLLAKMRSASRRALTSLVDWFGTMAQDLDHQGLTTLAGELVSVARLLDREAVVTRYLTVPAEDATPRIRLIERLVSGKVGAPTLEVLRTAVSKRWSANSDLIDAIEHVSRQALLELAERAGQVDEVEDQLFRFSRILDVQPRLAILLGDCAVPAEGRVRLLRKVLERADSTVNPVVVALLSHTVELLRGQAVEEAVLFLAEVAVARRGEIVAQVGAAAELSDAQRTRLTEVLSRIYGHPVTVQLHIDAALLGGLSIAVGDEVIDGTLSSRLAAAEARLPD.

Residues 1-168 (MSTFIGQLFG…PATADVDYPL (168 aa)) are ATP synthase subunit b. A helical transmembrane segment spans residues 4–24 (FIGQLFGFAVIVYLVWRFIVP). The ATP synthase subunit delta stretch occupies residues 169 to 446 (LAKMRSASRR…LAAAEARLPD (278 aa)).

In the N-terminal section; belongs to the ATPase B chain family. This sequence in the C-terminal section; belongs to the ATPase delta chain family. F-type ATPases have 2 components, F(1) - the catalytic core - and F(0) - the membrane proton channel. F(1) has five subunits: alpha(3), beta(3), gamma(1), delta(1), epsilon(1). F(0) has three main subunits: a(1), b(2) and c(10-14). The alpha and beta chains form an alternating ring which encloses part of the gamma chain. F(1) is attached to F(0) by a central stalk formed by the gamma and epsilon chains, while a peripheral stalk is formed by the delta and b chains.

It is found in the cell membrane. Its function is as follows. F(1)F(0) ATP synthase produces ATP from ADP in the presence of a proton or sodium gradient. F-type ATPases consist of two structural domains, F(1) containing the extramembraneous catalytic core and F(0) containing the membrane proton channel, linked together by a central stalk and a peripheral stalk. During catalysis, ATP synthesis in the catalytic domain of F(1) is coupled via a rotary mechanism of the central stalk subunits to proton translocation. In terms of biological role, this fusion protein includes a component of the F(0) channel (subunit b) and of the F(1) subunit (subunit delta). Two copies of subunit b and one of delta together form the peripheral 'stator' stalk which links F(1) to F(0). This chain is ATP synthase subunit b-delta (atpFH), found in Mycobacterium bovis (strain ATCC BAA-935 / AF2122/97).